Consider the following 2496-residue polypeptide: Non-reducing polyketide synthase adrD (2496 aa).

Residues 15-254 are N-terminal acylcarrier protein transacylase domain (SAT); the sequence is LVFGPQIAEI…HHASHITAVQ (240 aa). Residues 387–808 form the Ketosynthase family 3 (KS3) domain; sequence ATPIAITGMG…GSNAALVVKQ (422 aa). Catalysis depends on for beta-ketoacyl synthase activity residues Cys552, His687, and His726. Residues 914–1223 are malonyl-CoA:ACP transacylase (MAT) domain; the sequence is LCFGGQNGNE…QSLDLGGPQG (310 aa). Catalysis depends on Ser1001, which acts as the For acyl/malonyl transferase activity. The N-terminal hotdog fold stretch occupies residues 1295 to 1423; it reads KEFVQLLTKQ…GEISLHPFGQ (129 aa). In terms of domain architecture, PKS/mFAS DH spans 1295 to 1602; it reads KEFVQLLTKQ…FTSVSIAGLA (308 aa). The tract at residues 1296–1601 is product template (PT) domain; it reads EFVQLLTKQP…EFTSVSIAGL (306 aa). The active-site Proton acceptor; for dehydratase activity is His1326. The segment at 1451-1602 is C-terminal hotdog fold; it reads ESSGLKGFAV…FTSVSIAGLA (152 aa). The Proton donor; for dehydratase activity role is filled by Asp1509. Positions 1615-1629 are enriched in basic and acidic residues; sequence EKASPDLSLRNDSKV. The interval 1615 to 1645 is disordered; it reads EKASPDLSLRNDSKVDVNPTPQNTAPVVQPT. Residues 1633-1645 are compositionally biased toward polar residues; the sequence is PTPQNTAPVVQPT. Positions 1652-1726 constitute a Carrier domain; that stretch reads PGYFVVVQEM…ALVQTIFPDA (75 aa). O-(pantetheine 4'-phosphoryl)serine is present on Ser1686. The segment at 1888–2121 is methyltransferase (CMeT) domain; sequence QHRSEHHLLK…GFQWVDWTHN (234 aa). The tract at residues 2151-2496 is thioesterase (TE) domain; it reads RVMNEETVPY…YEFLRDHVRY (346 aa). Residues Ser2274 and Asp2433 each act as for thioesterase activity in the active site.

The catalysed reaction is 3 malonyl-CoA + acetyl-CoA + 2 S-adenosyl-L-methionine = 3,5-dimethylorsellinate + 2 S-adenosyl-L-homocysteine + 3 CO2 + 4 CoA. The protein operates within secondary metabolite biosynthesis; terpenoid biosynthesis. Functionally, non-reducing polyketide synthase; part of the gene cluster that mediates the biosynthesis of andrastins, meroterpenoid compounds that exhibit inhibitory activity against ras farnesyltransferase, suggesting that they could be promising leads for antitumor agents. The first step of the pathway is the synthesis of 3,5-dimethylorsellinic acid (DMOA) by the polyketide synthase adrD via condensation of one acetyl-CoA starter unit with 3 malonyl-CoA units and 2 methylations. DMAO is then converted to farnesyl-DMAO by the prenyltransferase adrG. The methyltransferase adrK catalyzes the methylation of the carboxyl group of farnesyl-DMAO to farnesyl-DMAO methyl ester which is further converted to epoxyfarnesyl-DMAO methyl ester by the FAD-dependent monooxygenase adrH. The terpene cyclase adrI then catalyzes the carbon skeletal rearrangement to generate the andrastin E, the first compound in the pathway having the andrastin scaffold, with the tetracyclic ring system. The post-cyclization tailoring enzymes adrF, adrE, adrJ, and adrA, are involved in the conversion of andrastin E into andrastin A. The short chain dehydrogenase adrF is responsible for the oxidation of the C-3 a hydroxyl group of andrastin E to yield the corresponding ketone, andrastin D. The ketoreductase adrE stereoselectively reduces the carbonyl moiety to reverse the stereochemistry of the C-3 position to yield andrastin F. The acetyltransferase adrJ is the acetyltransferase that attaches the acetyl group to the C-3 hydroxyl group of andrastin F to yield andrastin C. Finally, the cytochrome P450 monooxygenase adrA catalyzes two sequential oxidation reactions of the C-23 methyl group, to generate the corresponding alcohol andrastin B, and aldehyde andrastin A. This is Non-reducing polyketide synthase adrD from Penicillium rubens (strain ATCC 28089 / DSM 1075 / NRRL 1951 / Wisconsin 54-1255) (Penicillium chrysogenum).